Here is a 438-residue protein sequence, read N- to C-terminus: Xylose isomerase (438 aa).

Catalysis depends on residues His-100 and Asp-103. 7 residues coordinate Mg(2+): Glu-231, Glu-267, His-270, Asp-295, Asp-306, Asp-308, and Asp-338.

It belongs to the xylose isomerase family. As to quaternary structure, homotetramer. Requires Mg(2+) as cofactor.

The protein resides in the cytoplasm. It catalyses the reaction alpha-D-xylose = alpha-D-xylulofuranose. This chain is Xylose isomerase, found in Pseudomonas syringae pv. tomato (strain ATCC BAA-871 / DC3000).